Here is a 467-residue protein sequence, read N- to C-terminus: MIPITALKDKTVALFGLGGSGIATAKAIVAGGARIIAWDDNPDSVARAQSAGIATGDLRQADWSQFAVFVLSPGVPLTHPQPHWSVDLARAAGVEIIGDVELFVRERNHIAPDCPFIAITGTNGKSTTTALIAHIIKATGRDMQLGGNIGTAILTLEPPCADRFYVVECSSYQIDLAPSLNPTAGILLNLTPDHLDRHGSMENYAAIKERLVAASGTAIIGIDDAYCQAIADRLHGAGIRVVRISKEKHLDRGYFADGAKLLWAQDGEIDEIASLEGIGSLRGAHNAQNALAAIVACLSAGLSLEEIHAGLKSFPGLAHRMEQVGRRGKVLFVNDSKATNAEATAPALSSFPQNIYWIVGGVPKAGGINSLTAFFPRVAKAYLIGEAAAQFAATLGGAVPFEISDTLAAAVAHAAGDAGNDAAPEPVVLLSPACASFDQFQNFEKRGDAFRDAVLALPGVMPMRGGS.

121–127 (GTNGKST) provides a ligand contact to ATP.

It belongs to the MurCDEF family.

The protein resides in the cytoplasm. It carries out the reaction UDP-N-acetyl-alpha-D-muramoyl-L-alanine + D-glutamate + ATP = UDP-N-acetyl-alpha-D-muramoyl-L-alanyl-D-glutamate + ADP + phosphate + H(+). It participates in cell wall biogenesis; peptidoglycan biosynthesis. Functionally, cell wall formation. Catalyzes the addition of glutamate to the nucleotide precursor UDP-N-acetylmuramoyl-L-alanine (UMA). This Brucella abortus (strain 2308) protein is UDP-N-acetylmuramoylalanine--D-glutamate ligase.